A 209-amino-acid chain; its full sequence is Cytidylate kinase (209 aa).

ATP is bound at residue 7-15 (GVAASGKSS).

Belongs to the cytidylate kinase family. Type 1 subfamily.

Its subcellular location is the cytoplasm. The enzyme catalyses CMP + ATP = CDP + ADP. It catalyses the reaction dCMP + ATP = dCDP + ADP. In Deinococcus geothermalis (strain DSM 11300 / CIP 105573 / AG-3a), this protein is Cytidylate kinase.